We begin with the raw amino-acid sequence, 570 residues long: 4-hydroxy-7-methoxy-3-oxo-3,4-dihydro-2H-1,4-benzoxazin-2-yl glucoside beta-D-glucosidase 1c, chloroplastic (570 aa).

A chloroplast-targeting transit peptide spans 1–50 (MALLAAATLNPTTHLSIRSRAGHNSENLWLRSAASSQKSKGRFCNLTVRA). A beta-D-glucoside contacts are provided by residues Gln-92, His-194, and 239 to 240 (NE). Glu-240 acts as the Proton donor in catalysis. A disulfide bridge links Cys-259 with Cys-265. A beta-D-glucoside is bound by residues Tyr-383, Glu-456, Trp-504, 511–512 (EW), and Phe-520. The active-site Nucleophile is Glu-456.

The protein belongs to the glycosyl hydrolase 1 family. As to quaternary structure, homo- and heterohexamers. In terms of tissue distribution, expressed in young seedlings early after germination.

The protein resides in the plastid. Its subcellular location is the chloroplast. It carries out the reaction Hydrolysis of terminal, non-reducing beta-D-glucosyl residues with release of beta-D-glucose.. The catalysed reaction is DIMBOA beta-D-glucoside + H2O = DIMBOA + D-glucose. The enzyme catalyses DIBOA beta-D-glucoside + H2O = DIBOA + D-glucose. Functionally, acts in defense of young plant parts against pests via the production of hydroxamic acids from hydroxamic acid glucosides. Enzymatic activity is highly correlated with plant growth. The preferred substrate is DIMBOA-beta-D-glucoside. This chain is 4-hydroxy-7-methoxy-3-oxo-3,4-dihydro-2H-1,4-benzoxazin-2-yl glucoside beta-D-glucosidase 1c, chloroplastic (GLU1C), found in Triticum aestivum (Wheat).